The primary structure comprises 781 residues: Catenin beta-1 (781 aa).

Ala2 bears the N-acetylalanine mark. The segment at 2–23 (ATQADLMELDMAMEPDRKAAVS) is interaction with VCL. A Phosphoserine; by GSK3-beta; alternate modification is found at Ser23. O-linked (GlcNAc) serine; alternate glycosylation occurs at Ser23. Ser29 is subject to Phosphoserine; by GSK3-beta. Residues Ser33 and Ser37 each carry the phosphoserine; by GSK3-beta and HIPK2 modification. Residues 34-57 (GIHSGATTTAPSLSGKGNPEEEDV) are disordered. At Thr41 the chain carries Phosphothreonine; by GSK3-beta. Ser45 carries the phosphoserine modification. Lys49 is modified (N6-acetyllysine). Tyr64 carries the post-translational modification Phosphotyrosine; by PTK6. Tyr142 bears the Phosphotyrosine; by FYN and PTK6 mark. ARM repeat units follow at residues 151 to 191 (RAIP…IMRS), 193 to 234 (QMVS…IFKS), 235 to 276 (GGIP…VRLA), 277 to 318 (GGLQ…ILAS), 319 to 360 (GGPQ…IVEA), 361 to 389 (GGMQ…RNLS), 400 to 441 (GLLG…VCQV), 442 to 484 (GGIE…AQNA), 489 to 530 (YGLP…LREQ), 531 to 571 (GAIP…EIVE), 594 to 636 (NTIP…AEGA), and 637 to 666 (TAPL…SEDK). The segment at 156–178 (LTKLLNDEDQVVVNKAAVMVHQL) is interaction with BCL9. The residue at position 191 (Ser191) is a Phosphoserine. Residue Ser246 is modified to Phosphoserine; by CDK5. 2 positions are modified to phosphotyrosine: Tyr331 and Tyr333. Ser552 is subject to Phosphoserine. Thr556 is modified (phosphothreonine). Cys619 carries the S-nitrosocysteine modification. At Ser675 the chain carries Phosphoserine. A disordered region spans residues 720–781 (HSGGYGQDAL…NQLAWFDTDL (62 aa)). A compositionally biased stretch (basic and acidic residues) spans 734 to 745 (MMEHEMGGHHPG). Positions 772–781 (NQLAWFDTDL) are interaction with SCRIB.

This sequence belongs to the beta-catenin family. Two separate complex-associated pools are found in the cytoplasm. The majority is present as component of an E-cadherin/ catenin adhesion complex composed of at least E-cadherin/CDH1 and beta-catenin/CTNNB1, and possibly alpha-catenin/CTNNA1; the complex is located to adherens junctions. The stable association of CTNNA1 is controversial as CTNNA1 was shown not to bind to F-actin when assembled in the complex. Alternatively, the CTNNA1-containing complex may be linked to F-actin by other proteins such as LIMA1. Another cytoplasmic pool is part of a large complex containing AXIN1, AXIN2, APC, CSNK1A1 and GSK3B that promotes phosphorylation on N-terminal Ser and Thr residues and ubiquitination of CTNNB1. Interacts directly with AXIN1; the interaction is regulated by CK2 via BTRC and its subsequent degradation by the proteasome. Interacts directly with AXIN1; the interaction is regulated by CDK2 phosphorylation. Wnt-dependent activation of DVL antagonizes the action of GSK3B. When GSK3B activity is inhibited the complex dissociates, CTNNB1 is dephosphorylated and is no longer targeted for destruction. The stabilized protein translocates to the nucleus, where it binds TCF/LEF-1 family members, BCL9, BCL9L and possibly also RUVBL1 and CHD8. Binds CTNNBIP and EP300. CTNNB1 forms a ternary complex with LEF1 and EP300 that is disrupted by CTNNBIP1 binding. Interacts with TAX1BP3 (via the PDZ domain); this interaction inhibits the transcriptional activity of CTNNB1. Interacts with AJAP1, BAIAP1, CARM1, CTNNA3, CXADR and PCDH11Y. Binds NHERF1. Interacts with GLIS2. Interacts with XIRP1. Interacts with PTPRU (via the cytoplasmic juxtamembrane domain) and with SLC30A9. Interacts with EMD. Interacts with SCRIB. Interacts with TNIK and TCF7L2. Interacts with SESTD1 and TRPC4. Interacts directly with AXIN1; the interaction is regulated by CDK2 phosphorylation of AXIN1. Interacts with CAV1. Interacts with TRPV4. The TRPV4 and CTNNB1 complex can interact with CDH1. Interacts with VCL. Interacts with PTPRJ. Interacts with PKT7. Interacts with NANOS1. Interacts with CDK2, NDRG2, NEK2 and CDK5. Found in a complex composed of MACF1, APC, AXIN1, CTNNB1 and GSK3B. Interacts with PTK6. Interacts with SOX7; this interaction may lead to proteasomal degradation of active CTNNB1 and thus inhibition of Wnt/beta-catenin-stimulated transcription. Identified in a complex with HINT1 and MITF. Interacts with FHIT. The CTNNB1 and TCF4 complex interacts with PML. Interacts with FERMT2. Identified in a complex with TCF4 and FERMT2. Interacts with RAPGEF2. Interacts with FAT1 (via the cytoplasmic domain). Interacts with RORA. May interact with P-cadherin/CDH3. Interacts with RNF220. Interacts with CTNND2. Interacts (via the C-terminal region) with CBY1. The complex composed, at least, of APC, CTNNB1 and GSK3B interacts with JPT1; the interaction requires the inactive form of GSK3B (phosphorylated at 'Ser-9'). Interacts with DLG5. Interacts with FAM53B; promoting translocation to the nucleus. Interacts with TMEM170B. Interacts with AHI1. Interacts with GID8. Component of an cadherin:catenin adhesion complex composed of at least of CDH26, beta-catenin/CTNNB1, alpha-catenin/CTNNA1 and p120 catenin/CTNND1. Forms a complex comprising APPL1, RUVBL2, APPL2, HDAC1 and HDAC2. Interacts with IRF2BPL; mediates the ubiquitination and degradation of CTNNB1. Interacts with AMFR. Interacts with LMBR1L. Interacts with SOX30; prevents interaction of CTNNB1 with TCF7L2/TCF4 and leads to inhibition of Wnt signaling. Interacts with SOX9; inhibiting CTNNB1 activity by competing with the binding sites of TCF/LEF within CTNNB1, thereby inhibiting the Wnt signaling. Interacts with SPN/CD43 cytoplasmic tail. Interacts (when phosphorylated at Tyr-333) with isoform M2 of PKM (PKM2); promoting transcription activation. Interacts with PKP2 (via HEAD domain). Interacts with CDH1. Interacts (when unphosphorylated) with FLYWCH1, perhaps preventing interaction of CTNNB1 with TCF4, and thereby regulating transcription activation; phosphorylation of CTNNB1 may inhibit the interaction. Interacts (via the central armadillo domains) with probable transcriptional regulator ADNP (via N-terminal region); interaction is direct and stabilizes CTNNB1 by modulating its phosphorylation by glycogen synthase kinase-3 beta GSK3B. Interacts with NR5A2. Interacts with DSG2; the interaction promotes localization of CTNNB1 at cell junctions thus reducing its nuclear localization and subsequent transcription of CTNNB1/TCF-target genes. In terms of processing, phosphorylation by GSK3B requires prior phosphorylation of Ser-45 by another kinase. Phosphorylation proceeds then from Thr-41 to Ser-33. Phosphorylated by NEK2. EGF stimulates tyrosine phosphorylation. Phosphorylated on Ser-33 and Ser-37 by HIPK2. This phosphorylation triggers proteasomal degradation. Phosphorylation at Ser-552 by AMPK promotes stabilization of the protein, enhancing TCF/LEF-mediated transcription. Phosphorylation on Ser-191 and Ser-246 by CDK5. Phosphorylation by CDK2 regulates insulin internalization. Phosphorylation by PTK6 at Tyr-64, Tyr-142, Tyr-331 and/or Tyr-333 with the predominant site at Tyr-64 is not essential for inhibition of transcriptional activity. Phosphorylation by SRC at Tyr-333 promotes interaction with isoform M2 of PKM (PKM2); promoting transcription activation. Post-translationally, ubiquitinated by the SCF(BTRC) E3 ligase complex when phosphorylated by GSK3B, leading to its degradation. Ubiquitinated by a E3 ubiquitin ligase complex containing UBE2D1, SIAH1, CACYBP/SIP, SKP1, APC and TBL1X, leading to its subsequent proteasomal degradation. Ubiquitinated and degraded following interaction with SOX9. Ubiquitinated via 'Lys-11'- and 'Lys-29'-linked ubiquitin chains by UBR5, leading to its stabilization. S-nitrosylation at Cys-619 within adherens junctions promotes VEGF-induced, NO-dependent endothelial cell permeability by disrupting interaction with E-cadherin, thus mediating disassembly adherens junctions. In terms of processing, O-glycosylation at Ser-23 decreases nuclear localization and transcriptional activity, and increases localization to the plasma membrane and interaction with E-cadherin CDH1. Post-translationally, deacetylated at Lys-49 by SIRT1. In terms of tissue distribution, expressed in the testis.

It localises to the cytoplasm. The protein resides in the nucleus. It is found in the cytoskeleton. The protein localises to the cell junction. Its subcellular location is the adherens junction. It localises to the cell membrane. The protein resides in the microtubule organizing center. It is found in the centrosome. The protein localises to the spindle pole. Its subcellular location is the synapse. It localises to the cilium basal body. Functionally, key downstream component of the canonical Wnt signaling pathway. In the absence of Wnt, forms a complex with AXIN1, AXIN2, APC, CSNK1A1 and GSK3B that promotes phosphorylation on N-terminal Ser and Thr residues and ubiquitination of CTNNB1 via BTRC and its subsequent degradation by the proteasome. In the presence of Wnt ligand, CTNNB1 is not ubiquitinated and accumulates in the nucleus, where it acts as a coactivator for transcription factors of the TCF/LEF family, leading to activate Wnt responsive genes. Also acts as a coactivator for other transcription factors, such as NR5A2. Promotes epithelial to mesenchymal transition/mesenchymal to epithelial transition (EMT/MET) via driving transcription of CTNNB1/TCF-target genes. Involved in the regulation of cell adhesion, as component of an E-cadherin:catenin adhesion complex. Acts as a negative regulator of centrosome cohesion. Involved in the CDK2/PTPN6/CTNNB1/CEACAM1 pathway of insulin internalization. Blocks anoikis of malignant kidney and intestinal epithelial cells and promotes their anchorage-independent growth by down-regulating DAPK2. Disrupts PML function and PML-NB formation by inhibiting RANBP2-mediated sumoylation of PML. Promotes neurogenesis by maintaining sympathetic neuroblasts within the cell cycle. Involved in chondrocyte differentiation via interaction with SOX9: SOX9-binding competes with the binding sites of TCF/LEF within CTNNB1, thereby inhibiting the Wnt signaling. Acts as a positive regulator of odontoblast differentiation during mesenchymal tooth germ formation, via promoting the transcription of differentiation factors such as LEF1, BMP2 and BMP4. Activity is repressed in a MSX1-mediated manner at the bell stage of mesenchymal tooth germ formation which prevents premature differentiation of odontoblasts. This Rattus norvegicus (Rat) protein is Catenin beta-1.